Here is a 280-residue protein sequence, read N- to C-terminus: MAKNNVSTFVSAKHNNEKITMLTAYDYSMAKLMDESGINGILVGDSLGMVCLGYKDTLSVTMEDMLHHIKAVTRGAKDALVVGDMPFMSYQTSVYDAVKNAGRIIQEGLAGAVKLEGGVSVYEQVKAIVKAQIPVMGHIGLTPQSVNVFGGFKVQGKDESKAKNIIEDAKRLEEAGAFSIVLEGIPYKLAKIITETVSIPTIGIGAGKYCDGQILVYQDMLGLFSDFKPKFVKSYGNAGEVIRKAFKDYITEVKEGIFPDEEYSFKMDDSIIDKCIKEGV.

Positions 45 and 84 each coordinate Mg(2+). 3-methyl-2-oxobutanoate contacts are provided by residues 45-46 (DS), Asp84, and Lys114. Residue Glu116 participates in Mg(2+) binding. Glu183 (proton acceptor) is an active-site residue.

It belongs to the PanB family. As to quaternary structure, homodecamer; pentamer of dimers. Mg(2+) serves as cofactor.

The protein resides in the cytoplasm. It carries out the reaction 3-methyl-2-oxobutanoate + (6R)-5,10-methylene-5,6,7,8-tetrahydrofolate + H2O = 2-dehydropantoate + (6S)-5,6,7,8-tetrahydrofolate. Its pathway is cofactor biosynthesis; (R)-pantothenate biosynthesis; (R)-pantoate from 3-methyl-2-oxobutanoate: step 1/2. Its function is as follows. Catalyzes the reversible reaction in which hydroxymethyl group from 5,10-methylenetetrahydrofolate is transferred onto alpha-ketoisovalerate to form ketopantoate. This is 3-methyl-2-oxobutanoate hydroxymethyltransferase from Clostridium kluyveri (strain ATCC 8527 / DSM 555 / NBRC 12016 / NCIMB 10680 / K1).